We begin with the raw amino-acid sequence, 208 residues long: Ribosomal RNA large subunit methyltransferase E (208 aa).

Residues glycine 62, tryptophan 64, aspartate 82, aspartate 98, and aspartate 123 each contribute to the S-adenosyl-L-methionine site. The active-site Proton acceptor is the lysine 163.

The protein belongs to the class I-like SAM-binding methyltransferase superfamily. RNA methyltransferase RlmE family.

Its subcellular location is the cytoplasm. The enzyme catalyses uridine(2552) in 23S rRNA + S-adenosyl-L-methionine = 2'-O-methyluridine(2552) in 23S rRNA + S-adenosyl-L-homocysteine + H(+). Its function is as follows. Specifically methylates the uridine in position 2552 of 23S rRNA at the 2'-O position of the ribose in the fully assembled 50S ribosomal subunit. This is Ribosomal RNA large subunit methyltransferase E from Haemophilus ducreyi (strain 35000HP / ATCC 700724).